The sequence spans 368 residues: tRNA-specific 2-thiouridylase MnmA (368 aa).

ATP-binding positions include 11–18 and methionine 37; that span reads GMSGGVDS. Residues 97–99 are interaction with target base in tRNA; sequence NPD. Catalysis depends on cysteine 102, which acts as the Nucleophile. Cysteines 102 and 199 form a disulfide. Glycine 127 contributes to the ATP binding site. Positions 149–151 are interaction with tRNA; that stretch reads KDQ. The active-site Cysteine persulfide intermediate is cysteine 199. The tract at residues 311–312 is interaction with tRNA; that stretch reads RY.

This sequence belongs to the MnmA/TRMU family. Interacts with TusE.

It localises to the cytoplasm. It carries out the reaction S-sulfanyl-L-cysteinyl-[protein] + uridine(34) in tRNA + AH2 + ATP = 2-thiouridine(34) in tRNA + L-cysteinyl-[protein] + A + AMP + diphosphate + H(+). Functionally, catalyzes the 2-thiolation of uridine at the wobble position (U34) of tRNA(Lys), tRNA(Glu) and tRNA(Gln), leading to the formation of s(2)U34, the first step of tRNA-mnm(5)s(2)U34 synthesis. Sulfur is provided by IscS, via a sulfur-relay system. Binds ATP and its substrate tRNAs. This chain is tRNA-specific 2-thiouridylase MnmA, found in Escherichia coli O157:H7.